A 693-amino-acid chain; its full sequence is Heat shock protein homolog SSE1 (693 aa).

Residue Ser2 is modified to N-acetylserine. Residue Lys195 forms a Glycyl lysine isopeptide (Lys-Gly) (interchain with G-Cter in ubiquitin) linkage. Thr242 carries the phosphothreonine modification. A disordered region spans residues Ile653–Asp693. Ser660 is subject to Phosphoserine. A compositionally biased stretch (basic and acidic residues) spans Arg673–Glu687.

The protein belongs to the heat shock protein 70 family.

It localises to the cytoplasm. Has a calcium-dependent calmodulin-binding activity. Required for normal growth at various temperatures. The chain is Heat shock protein homolog SSE1 (SSE1) from Saccharomyces cerevisiae (strain ATCC 204508 / S288c) (Baker's yeast).